The chain runs to 214 residues: Outer-membrane lipoprotein LolB (214 aa).

The N-terminal stretch at 1-25 (MNNLKRFTKSIFSCIALSGLLFLGG) is a signal peptide. Cys-26 carries N-palmitoyl cysteine lipidation. Cys-26 carries the S-diacylglycerol cysteine lipid modification.

It belongs to the LolB family. As to quaternary structure, monomer.

It is found in the cell outer membrane. Plays a critical role in the incorporation of lipoproteins in the outer membrane after they are released by the LolA protein. The protein is Outer-membrane lipoprotein LolB of Shewanella oneidensis (strain ATCC 700550 / JCM 31522 / CIP 106686 / LMG 19005 / NCIMB 14063 / MR-1).